Here is a 187-residue protein sequence, read N- to C-terminus: Protein GrpE (187 aa).

The interval 1–31 (MEKKETKNDAEKNNKQDNKSTKSQKKENLNL) is disordered.

It belongs to the GrpE family. In terms of assembly, homodimer.

The protein localises to the cytoplasm. Functionally, participates actively in the response to hyperosmotic and heat shock by preventing the aggregation of stress-denatured proteins, in association with DnaK and GrpE. It is the nucleotide exchange factor for DnaK and may function as a thermosensor. Unfolded proteins bind initially to DnaJ; upon interaction with the DnaJ-bound protein, DnaK hydrolyzes its bound ATP, resulting in the formation of a stable complex. GrpE releases ADP from DnaK; ATP binding to DnaK triggers the release of the substrate protein, thus completing the reaction cycle. Several rounds of ATP-dependent interactions between DnaJ, DnaK and GrpE are required for fully efficient folding. The sequence is that of Protein GrpE from Borrelia garinii subsp. bavariensis (strain ATCC BAA-2496 / DSM 23469 / PBi) (Borreliella bavariensis).